Reading from the N-terminus, the 254-residue chain is Protein odd-skipped-related 2 (254 aa).

3 C2H2-type zinc fingers span residues 124–146 (FICK…ERTH), 152–174 (YSCD…KYIH), and 180–202 (FKCE…RATH).

It belongs to the Odd C2H2-type zinc-finger protein family.

It is found in the nucleus. Its function is as follows. May function as transcription regulator. Required for morphogenesis and function of the digestive tract. In Caenorhabditis elegans, this protein is Protein odd-skipped-related 2.